Here is a 440-residue protein sequence, read N- to C-terminus: Chromosome partition protein MukF (440 aa).

The interval 208 to 236 (LDETSGNLRELQDTLNAAGDKLQSQLLRI) is leucine-zipper.

Belongs to the MukF family. As to quaternary structure, interacts, and probably forms a ternary complex, with MukE and MukB via its C-terminal region. The complex formation is stimulated by calcium or magnesium. It is required for an interaction between MukE and MukB.

It localises to the cytoplasm. The protein resides in the nucleoid. Involved in chromosome condensation, segregation and cell cycle progression. May participate in facilitating chromosome segregation by condensation DNA from both sides of a centrally located replisome during cell division. Not required for mini-F plasmid partitioning. Probably acts via its interaction with MukB and MukE. Overexpression results in anucleate cells. It has a calcium binding activity. The protein is Chromosome partition protein MukF of Histophilus somni (strain 129Pt) (Haemophilus somnus).